Here is a 427-residue protein sequence, read N- to C-terminus: A-adding tRNA nucleotidyltransferase (427 aa).

49–52 lines the ATP pocket; sequence GTVR. Mg(2+)-binding residues include aspartate 62 and aspartate 64. Residues 136–137, asparagine 141, 181–190, arginine 194, and arginine 225 each bind ATP; these read RD and DPTRLLRGVR.

This sequence belongs to the tRNA nucleotidyltransferase/poly(A) polymerase family. The cofactor is Mg(2+).

The catalysed reaction is a tRNA with a 3' CC end + ATP = a tRNA with a 3' CCA end + diphosphate. Its function is as follows. tRNA nucleotidyltransferase involved in the synthesis of the tRNA CCA terminus. Adds the terminal adenosine residue to tRNA. In Halalkalibacterium halodurans (strain ATCC BAA-125 / DSM 18197 / FERM 7344 / JCM 9153 / C-125) (Bacillus halodurans), this protein is A-adding tRNA nucleotidyltransferase.